Consider the following 143-residue polypeptide: Glutaredoxin-2 (143 aa).

The N-terminal 30 residues, 1 to 30 (METNFSFDSNLIVIIIITLFATRIIAKRFL), are a transit peptide targeting the mitochondrion. At Ser-37 the chain carries Phosphoserine. The 103-residue stretch at 41 to 143 (VAHVKDLIGQ…LAEILKPVFQ (103 aa)) folds into the Glutaredoxin domain. Residue 58-63 (KTYCPY) participates in glutathione binding. Cys-61 carries the post-translational modification S-glutathionyl cysteine; alternate. Cys-61 and Cys-64 are oxidised to a cystine. Position 91 is a phosphoserine (Ser-91). Glutathione is bound by residues Val-109 and 122–123 (NS).

This sequence belongs to the glutaredoxin family.

The protein localises to the cytoplasm. It is found in the mitochondrion. The enzyme catalyses 2 glutathione + H2O2 = glutathione disulfide + 2 H2O. It catalyses the reaction 1-chloro-2,4-dinitrobenzene + glutathione = 2,4-dinitrophenyl-S-glutathione + chloride + H(+). The catalysed reaction is RX + glutathione = an S-substituted glutathione + a halide anion + H(+). Functionally, component of the glutathione system which performs several activities such as glutathione-dependent oxidoreductase, glutathione peroxidase and glutathione S-transferase (GST) activity. The disulfide bond functions as an electron carrier in the glutathione-dependent synthesis of deoxyribonucleotides by the enzyme ribonucleotide reductase. In addition, it is also involved in reducing cytosolic protein- and non-protein-disulfides in a coupled system with glutathione reductase. Required for resistance to reactive oxygen species (ROS) by directly reducing hydroperoxides and for the detoxification of ROS-mediated damage. GRX2 is more active as an oxidoreductase than GRX1. Responsible for the S-glutathionylation of DHBP synthase. In Saccharomyces cerevisiae (strain ATCC 204508 / S288c) (Baker's yeast), this protein is Glutaredoxin-2 (GRX2).